A 187-amino-acid chain; its full sequence is BLOC-1-related complex subunit 8 homolog (187 aa).

The tract at residues Gln-165–Asp-187 is disordered.

This sequence belongs to the BORCS8 family.

The protein resides in the lysosome membrane. May participate in the coupling of lysosomes to microtubule plus-end-directed kinesin motor. The polypeptide is BLOC-1-related complex subunit 8 homolog (Nematostella vectensis (Starlet sea anemone)).